The primary structure comprises 129 residues: Small ribosomal subunit protein eS8 (129 aa).

Positions M1 to G29 are disordered.

Belongs to the eukaryotic ribosomal protein eS8 family. Part of the 30S ribosomal subunit.

This chain is Small ribosomal subunit protein eS8 (rps8e), found in Methanocaldococcus jannaschii (strain ATCC 43067 / DSM 2661 / JAL-1 / JCM 10045 / NBRC 100440) (Methanococcus jannaschii).